Consider the following 370-residue polypeptide: GTPase Obg (370 aa).

Positions 1-159 constitute an Obg domain; that stretch reads MKFIDEARIE…RMLRLELKVL (159 aa). The disordered stretch occupies residues 127–146; sequence NLHFKSSTNRAPRQKTDGKP. Residues 160 to 334 enclose the OBG-type G domain; it reads ADVGLLGMPN…LCYAIYDYLA (175 aa). GTP is bound by residues 166–173, 191–195, 213–216, 284–287, and 315–317; these read GMPNAGKS, FTTLA, DIPG, NKLD, and SAL. Positions 173 and 193 each coordinate Mg(2+).

This sequence belongs to the TRAFAC class OBG-HflX-like GTPase superfamily. OBG GTPase family. In terms of assembly, monomer. Mg(2+) is required as a cofactor.

The protein resides in the cytoplasm. In terms of biological role, an essential GTPase which binds GTP, GDP and possibly (p)ppGpp with moderate affinity, with high nucleotide exchange rates and a fairly low GTP hydrolysis rate. Plays a role in control of the cell cycle, stress response, ribosome biogenesis and in those bacteria that undergo differentiation, in morphogenesis control. The protein is GTPase Obg of Burkholderia lata (strain ATCC 17760 / DSM 23089 / LMG 22485 / NCIMB 9086 / R18194 / 383).